The primary structure comprises 1386 residues: MSSSVRRKGKPGKGGGKGSSRGGRGGRSHASKSHGSGGGGGGGGGGGGGNRKASSRIWDDGDDFCIFSESRRPSRPSNSNISKGESRPKWKPKAKVPLQTLHMTSENQEKVKALLRDLQEQDADAGSERGLSGEEEDDEPDCCNDERYWPAGQEPSLVPDLDPLEYAGLASVEPYVPEFTVSPFAVQKLSRYGFNTERCQAVLRMCDGDVGASLEHLLTQCFSETFGERMKISEAVNQISLDECMEQRQEEAFALKSICGEKFIERIQNRVWTIGLELEYLTSRFRKSKPKESTKNVQENSLEICKFYLKGNCKFGSKCRFKHEVPPNQIVGRIERSVDDSHLNAIEDASFLYELEIRFSKDHKYPYQAPLVAFYSTNENLPLACRLHISEFLYDKALTFAETSEPVVYSLITLLEEESEIVKLLTNTHHKYSDPPVNFLPVPSRTRINNPACHKTVIPNNSFVSNQIPEVEKASESEESDEDDGPAPVIVENESYVNLKKKISKRYDWQAKSVHAENGKICKQFRMKQASRQFQSILQERQSLPAWEERETILNLLRKHQVVVISGMTGCGKTTQIPQFILDDSLNGPPEKVANIICTQPRRISAISVAERVAKERAERVGLTVGYQIRLESVKSSATRLLYCTTGVLLRRLEGDTALQGVSHIIVDEVHERTEESDFLLLVLKDIVSQRPGLQVILMSATLNAELFSDYFNSCPVITIPGRTFPVDQFFLEDAIAVTRYVLQDGSPYMRSMKQISKEKLKARRNRTAFEEVEEDLRLSLHLQDQDSVKDAVPDQQLDFKQLLARYKGVSKSVIKTMSIMDFEKVNLELIEALLEWIVDGKHSYPPGAILVFLPGLAEIKMLYEQLQSNSLFNNRRSNRCVIHPLHSSLSSEEQQAVFVKPPAGVTKIIISTNIAETSITIDDVVYVIDSGKMKEKRYDASKGMESLEDTFVSQANALQRKGRAGRVASGVCFHLFTSHHYNHQLLKQQLPEIQRVPLEQLCLRIKILEMFSAHNLQSVFSRLIEPPHTDSLRASKIRLRDLGALTPDERLTPLGYHLASLPVDVRIGKLMLFGSIFRCLDPALTIAASLAFKSPFVSPWDKKEEANQKKLEFAFANSDYLALLQAYKGWQLSTKEGVRASYNYCRQNFLSGRVLQEMASLKRQFTELLSDIGFAREGLRAREIEKRAQGGDGVLDATGEEANSNAENPKLISAMLCAALYPNVVQVKSPEGKFQKTSTGAVRMQPKSAELKFVTKNDGYVHIHPSSVNYQVRHFDSPYLLYHEKIKTSRVFIRDCSMVSVYPLVLFGGGQVNVQLQRGEFVVSLDDGWIRFVAASHQVAELVKELRCELDQLLQDKIKNPSIDLCTCPRGSRIISTIVKLVTTQ.

The segment covering 1–11 (MSSSVRRKGKP) has biased composition (basic residues). Disordered stretches follow at residues 1–106 (MSSS…MTSE) and 120–147 (EQDA…NDER). Composition is skewed to gly residues over residues 12–23 (GKGGGKGSSRGG) and 35–50 (GSGG…GGGN). A coiled-coil region spans residues 101–125 (LHMTSENQEKVKALLRDLQEQDADA). Ser-127 and Ser-132 each carry phosphoserine. The segment covering 133–143 (GEEEDDEPDCC) has biased composition (acidic residues). A UBA domain is found at 180 to 220 (TVSPFAVQKLSRYGFNTERCQAVLRMCDGDVGASLEHLLTQ). The C3H1-type zinc finger occupies 299-326 (ENSLEICKFYLKGNCKFGSKCRFKHEVP). Ser-475, Ser-477, and Ser-480 each carry phosphoserine. Positions 554–721 (LNLLRKHQVV…FNSCPVITIP (168 aa)) constitute a Helicase ATP-binding domain. ATP is bound at residue 567–574 (GMTGCGKT). The DEVH box motif lies at 668–671 (DEVH). Residues 830-1010 (LIEALLEWIV…QLCLRIKILE (181 aa)) form the Helicase C-terminal domain.

Belongs to the DEAD box helicase family. DEAH subfamily.

The enzyme catalyses ATP + H2O = ADP + phosphate + H(+). Its function is as follows. Probable ATP-binding RNA helicase. The polypeptide is Putative ATP-dependent RNA helicase DHX57 (DHX57) (Homo sapiens (Human)).